We begin with the raw amino-acid sequence, 358 residues long: Chorismate synthase (358 aa).

Position 47 (R47) interacts with NADP(+). FMN is bound by residues 124 to 126 (RSS), 240 to 241 (NA), G284, 299 to 303 (KPVAT), and R325.

This sequence belongs to the chorismate synthase family. Homotetramer. It depends on FMNH2 as a cofactor.

The catalysed reaction is 5-O-(1-carboxyvinyl)-3-phosphoshikimate = chorismate + phosphate. It functions in the pathway metabolic intermediate biosynthesis; chorismate biosynthesis; chorismate from D-erythrose 4-phosphate and phosphoenolpyruvate: step 7/7. Functionally, catalyzes the anti-1,4-elimination of the C-3 phosphate and the C-6 proR hydrogen from 5-enolpyruvylshikimate-3-phosphate (EPSP) to yield chorismate, which is the branch point compound that serves as the starting substrate for the three terminal pathways of aromatic amino acid biosynthesis. This reaction introduces a second double bond into the aromatic ring system. The chain is Chorismate synthase from Bacteroides fragilis (strain YCH46).